Consider the following 111-residue polypeptide: Large ribosomal subunit protein uL22 (111 aa).

The protein belongs to the universal ribosomal protein uL22 family. As to quaternary structure, part of the 50S ribosomal subunit.

Functionally, this protein binds specifically to 23S rRNA; its binding is stimulated by other ribosomal proteins, e.g. L4, L17, and L20. It is important during the early stages of 50S assembly. It makes multiple contacts with different domains of the 23S rRNA in the assembled 50S subunit and ribosome. Its function is as follows. The globular domain of the protein is located near the polypeptide exit tunnel on the outside of the subunit, while an extended beta-hairpin is found that lines the wall of the exit tunnel in the center of the 70S ribosome. The protein is Large ribosomal subunit protein uL22 of Protochlamydia amoebophila (strain UWE25).